We begin with the raw amino-acid sequence, 898 residues long: Putative aconitate hydratase, cytoplasmic (898 aa).

Residues Q90 and 209 to 211 (DSH) each bind substrate. 3 residues coordinate [4Fe-4S] cluster: C441, C507, and C510. Residues R540, R545, R703, and 784–785 (SR) each bind substrate.

This sequence belongs to the aconitase/IPM isomerase family. The cofactor is [4Fe-4S] cluster.

The protein localises to the cytoplasm. It catalyses the reaction citrate = D-threo-isocitrate. Its pathway is carbohydrate metabolism; glyoxylate and dicarboxylate metabolism. Functionally, catalyzes the isomerization of citrate to isocitrate via cis-aconitate. This is Putative aconitate hydratase, cytoplasmic from Oryza sativa subsp. japonica (Rice).